The chain runs to 468 residues: O-methyltransferase lcsG (468 aa).

Polar residues predominate over residues 1-12 (MGDNVQSDTTAA). The tract at residues 1–29 (MGDNVQSDTTAAQAGITDAPTAPTSAPVS) is disordered. S-adenosyl-L-methionine-binding positions include 298 to 299 (GG), Asp321, 348 to 349 (DF), and Lys363.

It belongs to the class I-like SAM-binding methyltransferase superfamily. Cation-independent O-methyltransferase family.

Its pathway is secondary metabolite biosynthesis. O-methyltransferase; part of the gene cluster that mediates the biosynthesis of the lipopeptide antibiotics leucinostatins that show extensive biological activities, including antimalarial, antiviral, antibacterial, antifungal, and antitumor activities, as well as phytotoxic. Leucinostatin A contains nine amino acid residues, including the unusual amino acid 4-methyl-L-proline (MePro), 2-amino-6-hydroxy-4-methyl-8-oxodecanoic acid (AHyMeOA), 3-hydroxyleucine (HyLeu), alpha-aminoisobutyric acid (AIB), beta-Ala, a 4-methylhex-2-enoic acid at the N-terminus as well as a N1,N1-dimethylpropane-1,2-diamine (DPD) at the C-terminus. The biosynthesis of leucinostatins is probably initiated with the assembly of 4-methylhex-2-enoic acid by a reducing PKS. Two reducing polyketide synthases, lcsB and lcsC, have been identified in the cluster and it is not clear which is the one that assembles 4-methylhex-2-enoic acid since both contain KS, AT, DH, cMT, ER, KR and ACP domains. The polyketide residue might be transferred to the NRPS lcsA, mediated by two additional enzymes, the acyl-CoA ligase lcsD and the thioesterase lcsE. The linear polyketide carboxylic acid, which is released from PKS, is converted to a CoA thioester by lcsD, and then lcsE hydrolyzes the thiol bond and shuttles the polyketide intermediate to lcsA. The C domain of the first module catalyzed the condensation of 4-methylhex-2-enoic acid and MePro carried by domain A1, followed by successive condensations of nine amino acids to trigger the elongation of the linear peptide. A5 and A6 domains of lcsA are proposed to incorporate leucine, A2 AHyMeOA, and A3 incorporates HyLeu. A4, A7 and A8 incorporate AIB. The AHyMeOA in leucinostatin A activated by the A2 might be produced by the second PKS (lcsB or lcsC) present within the cluster. The MePro is probably produced via leucine cyclization and may originate from a separate pathway, independent of the cluster. Another nonproteinogenic amino acid, beta-Ala, could be produced by an aspartic acid decarboxylase also localized outside of the cluster. Two candidates are VFPBJ_01400 and VFPBJ_10476. The final peptide scaffold may be released by the NAD(P)H-dependent thioester reductase (TE) at the C-terminal region of lcsA. Transamination of the lcsA product by the transaminase lcsP may produce DPD at the C-terminus. Further hydroxylation steps performed alternatively by the cytochrome P450 monooxygenases lcsI, lcsK and lcsN then yield the non-methylated leucinostatins precursor. It is also possible that leucines can be hydroxylated prior to their incorporation into the peptide. Varying extents of methylation then lead to the formation of leucinostatins A and B. The polypeptide is O-methyltransferase lcsG (Purpureocillium lilacinum (Paecilomyces lilacinus)).